Here is a 317-residue protein sequence, read N- to C-terminus: Protease HtpX homolog (317 aa).

2 helical membrane-spanning segments follow: residues 6-26 and 28-48; these read TAIL…AIGG and GGMM…YWNS. H130 lines the Zn(2+) pocket. E131 is a catalytic residue. A Zn(2+)-binding site is contributed by H134. A run of 2 helical transmembrane segments spans residues 145–165 and 173–193; these read MTAT…LFGG and PFGA…AMLV. Zn(2+) is bound at residue E202. Residues 283–317 form a disordered region; the sequence is GGGGFAPGPAPAVRPPGGNPWGVDPGGGQRRGPWG. Over residues 290–300 the composition is skewed to pro residues; that stretch reads GPAPAVRPPGG. Over residues 306-317 the composition is skewed to gly residues; the sequence is DPGGGQRRGPWG.

This sequence belongs to the peptidase M48B family. Zn(2+) is required as a cofactor.

It localises to the cell inner membrane. This chain is Protease HtpX homolog, found in Xanthobacter autotrophicus (strain ATCC BAA-1158 / Py2).